Consider the following 195-residue polypeptide: Imidazoleglycerol-phosphate dehydratase (195 aa).

Belongs to the imidazoleglycerol-phosphate dehydratase family.

It is found in the cytoplasm. It catalyses the reaction D-erythro-1-(imidazol-4-yl)glycerol 3-phosphate = 3-(imidazol-4-yl)-2-oxopropyl phosphate + H2O. It functions in the pathway amino-acid biosynthesis; L-histidine biosynthesis; L-histidine from 5-phospho-alpha-D-ribose 1-diphosphate: step 6/9. In Thiobacillus denitrificans (strain ATCC 25259 / T1), this protein is Imidazoleglycerol-phosphate dehydratase.